Consider the following 452-residue polypeptide: Lipase member H (452 aa).

Positions 1-16 (MLRFYLFISLLCLVRS) are cleaved as a signal peptide. 3 N-linked (GlcNAc...) asparagine glycosylation sites follow: asparagine 50, asparagine 66, and asparagine 122. Residue serine 154 is the Nucleophile of the active site. The active-site Charge relay system is aspartate 178. Cysteine 233 and cysteine 247 are disulfide-bonded. The active-site Charge relay system is histidine 249. An N-linked (GlcNAc...) asparagine glycan is attached at asparagine 263. Intrachain disulfides connect cysteine 271–cysteine 282, cysteine 285–cysteine 293, and cysteine 428–cysteine 447.

This sequence belongs to the AB hydrolase superfamily. Lipase family. In terms of assembly, interacts with TTMP/C3orf52. In terms of tissue distribution, expressed in liver and lacrimal gland.

It localises to the secreted. The protein resides in the cell membrane. It carries out the reaction 1-hexadecanoyl-2-(9Z-octadecenoyl)-sn-glycero-3-phosphate + H2O = 2-(9Z-octadecenoyl)-sn-glycero-3-phosphate + hexadecanoate + H(+). Hydrolyzes specifically phosphatidic acid (PA) to produce 2-acyl lysophosphatidic acid (LPA; a potent bioactive lipid mediator) and fatty acid. Does not hydrolyze other phospholipids, like phosphatidylserine (PS), phosphatidylcholine (PC) and phosphatidylethanolamine (PE) or triacylglycerol (TG). The sequence is that of Lipase member H (LIPH) from Oryctolagus cuniculus (Rabbit).